The sequence spans 376 residues: Putative phosphoserine aminotransferase (376 aa).

A disordered region spans residues 1–30 (MADQLTPSLDIPAALKPRDGRFGSGPSKVR). Arginine 50 provides a ligand contact to L-glutamate. Pyridoxal 5'-phosphate is bound by residues 84–85 (AT), phenylalanine 108, threonine 154, aspartate 176, and glutamine 199. At lysine 200 the chain carries N6-(pyridoxal phosphate)lysine. 251–252 (NT) provides a ligand contact to pyridoxal 5'-phosphate.

This sequence belongs to the class-V pyridoxal-phosphate-dependent aminotransferase family. SerC subfamily. As to quaternary structure, homodimer. It depends on pyridoxal 5'-phosphate as a cofactor.

It localises to the cytoplasm. The catalysed reaction is O-phospho-L-serine + 2-oxoglutarate = 3-phosphooxypyruvate + L-glutamate. It catalyses the reaction 4-(phosphooxy)-L-threonine + 2-oxoglutarate = (R)-3-hydroxy-2-oxo-4-phosphooxybutanoate + L-glutamate. It participates in amino-acid biosynthesis; L-serine biosynthesis; L-serine from 3-phospho-D-glycerate: step 2/3. It functions in the pathway cofactor biosynthesis; pyridoxine 5'-phosphate biosynthesis; pyridoxine 5'-phosphate from D-erythrose 4-phosphate: step 3/5. Catalyzes the reversible conversion of 3-phosphohydroxypyruvate to phosphoserine and of 3-hydroxy-2-oxo-4-phosphonooxybutanoate to phosphohydroxythreonine. This Mycobacterium leprae (strain TN) protein is Putative phosphoserine aminotransferase.